The chain runs to 276 residues: Diaminopimelate epimerase (276 aa).

Substrate is bound by residues N13, Q46, and N66. Catalysis depends on C75, which acts as the Proton donor. Substrate-binding positions include 76–77 (GN), N159, N192, and 210–211 (ER). C219 (proton acceptor) is an active-site residue. 220 to 221 (GT) lines the substrate pocket.

Belongs to the diaminopimelate epimerase family. In terms of assembly, homodimer.

The protein resides in the cytoplasm. The catalysed reaction is (2S,6S)-2,6-diaminopimelate = meso-2,6-diaminopimelate. Its pathway is amino-acid biosynthesis; L-lysine biosynthesis via DAP pathway; DL-2,6-diaminopimelate from LL-2,6-diaminopimelate: step 1/1. In terms of biological role, catalyzes the stereoinversion of LL-2,6-diaminopimelate (L,L-DAP) to meso-diaminopimelate (meso-DAP), a precursor of L-lysine and an essential component of the bacterial peptidoglycan. The chain is Diaminopimelate epimerase from Pseudoalteromonas translucida (strain TAC 125).